Reading from the N-terminus, the 351-residue chain is Anthranilate phosphoribosyltransferase (351 aa).

5-phospho-alpha-D-ribose 1-diphosphate contacts are provided by residues Gly-80, 83–84 (GD), Thr-88, 90–93 (NIST), 108–116 (KHGNRSVTS), and Ser-120. Gly-80 serves as a coordination point for anthranilate. Ser-92 provides a ligand contact to Mg(2+). Residue Asn-111 participates in anthranilate binding. Arg-166 is a binding site for anthranilate. Residues Asp-229 and Glu-230 each coordinate Mg(2+).

This sequence belongs to the anthranilate phosphoribosyltransferase family. As to quaternary structure, homodimer. The cofactor is Mg(2+).

The enzyme catalyses N-(5-phospho-beta-D-ribosyl)anthranilate + diphosphate = 5-phospho-alpha-D-ribose 1-diphosphate + anthranilate. Its pathway is amino-acid biosynthesis; L-tryptophan biosynthesis; L-tryptophan from chorismate: step 2/5. Catalyzes the transfer of the phosphoribosyl group of 5-phosphorylribose-1-pyrophosphate (PRPP) to anthranilate to yield N-(5'-phosphoribosyl)-anthranilate (PRA). This is Anthranilate phosphoribosyltransferase from Pelodictyon phaeoclathratiforme (strain DSM 5477 / BU-1).